The following is a 271-amino-acid chain: 4-hydroxy-tetrahydrodipicolinate reductase (271 aa).

NAD(+) is bound by residues glycine 10 to methionine 15, glutamate 36, glycine 100 to threonine 102, and serine 124 to methionine 127. Residue histidine 157 is the Proton donor/acceptor of the active site. Histidine 158 lines the (S)-2,3,4,5-tetrahydrodipicolinate pocket. Catalysis depends on lysine 161, which acts as the Proton donor. Glycine 167–threonine 168 is a (S)-2,3,4,5-tetrahydrodipicolinate binding site.

Belongs to the DapB family.

The protein resides in the cytoplasm. It catalyses the reaction (S)-2,3,4,5-tetrahydrodipicolinate + NAD(+) + H2O = (2S,4S)-4-hydroxy-2,3,4,5-tetrahydrodipicolinate + NADH + H(+). The enzyme catalyses (S)-2,3,4,5-tetrahydrodipicolinate + NADP(+) + H2O = (2S,4S)-4-hydroxy-2,3,4,5-tetrahydrodipicolinate + NADPH + H(+). Its pathway is amino-acid biosynthesis; L-lysine biosynthesis via DAP pathway; (S)-tetrahydrodipicolinate from L-aspartate: step 4/4. Its function is as follows. Catalyzes the conversion of 4-hydroxy-tetrahydrodipicolinate (HTPA) to tetrahydrodipicolinate. The polypeptide is 4-hydroxy-tetrahydrodipicolinate reductase (Rhodopseudomonas palustris (strain BisB18)).